Consider the following 768-residue polypeptide: Levansucrase (768 aa).

An N-terminal signal peptide occupies residues 1 to 36 (MLENKKHKKMSLSGKSLLMGTLSTAAIVLSASTVNA). Composition is skewed to polar residues over residues 57–68 (SASVNKNDNSGL), 80–99 (TETNLNSSLNSGKETSSQVN), 106–134 (SSTQVGSTPISSAIINNGKASSDLNQDSD), and 143–153 (NNSQGQSSTSS). The segment at 57–158 (SASVNKNDNS…SSTSSEKTEL (102 aa)) is disordered. 3 residues coordinate sucrose: Trp-250, Asp-251, and Ser-320. Asp-251 functions as the Nucleophile in the catalytic mechanism. Asp-398 serves as a coordination point for Ca(2+). The sucrose site is built by Arg-403 and Asp-404. The Ca(2+) site is built by Gln-429, Asn-468, and Asp-502. Glu-503 contacts sucrose. Residue Glu-505 is the Proton donor/acceptor of the active site. Arg-523 contributes to the sucrose binding site. The tract at residues 688-736 (HQPVTPNVPTTPEKPENPTTPNTPDTPRTPEVPTTPVKKTTQSELPKAG) is disordered. Positions 691 to 727 (VTPNVPTTPEKPENPTTPNTPDTPRTPEVPTTPVKKT) are enriched in low complexity. Positions 732–736 (LPKAG) match the LPXTG sorting signal motif. The residue at position 735 (Ala-735) is a Pentaglycyl murein peptidoglycan amidated alanine. A propeptide spans 736–768 (GAKDGIAATILGAISSMLGVIGLAGISKRKRNN) (removed by sortase).

This sequence belongs to the glycosyl hydrolase 68 family.

It is found in the secreted. The protein localises to the cell wall. Its subcellular location is the cell surface. The enzyme catalyses [6)-beta-D-fructofuranosyl-(2-&gt;](n) alpha-D-glucopyranoside + sucrose = [6)-beta-D-fructofuranosyl-(2-&gt;](n+1) alpha-D-glucopyranoside + D-glucose. Calcium ions are required for optimal activity, but do not seem to be essential since addition of EDTA causes only a 48% drop in activity. Ca(2+) may play an important structural role and promote stability of levansucrase. Fructosyltransferase that catalyzes the polymerization of the fructose moiety of sucrose to produce levan polymer and the fructo-oligosaccharide (FOS) 1-kestose. Is also able to convert raffinose into a fructan polymer and a single oligosaccharide (most likely Gal-Glc-Frc-Frc) in vitro; however, L.gasseri strain DSM 20077 is unable to ferment raffinose. Also displays sucrose hydrolase activity. In Lactobacillus gasseri, this protein is Levansucrase.